The following is a 137-amino-acid chain: Large ribosomal subunit protein uL16 (137 aa).

It belongs to the universal ribosomal protein uL16 family. Part of the 50S ribosomal subunit.

Its function is as follows. Binds 23S rRNA and is also seen to make contacts with the A and possibly P site tRNAs. The protein is Large ribosomal subunit protein uL16 of Streptococcus pneumoniae serotype 2 (strain D39 / NCTC 7466).